A 154-amino-acid polypeptide reads, in one-letter code: Myoglobin (154 aa).

Positions 2-148 (GLSDGEWELV…FRNDIAAKYK (147 aa)) constitute a Globin domain. A Phosphoserine modification is found at serine 4. Threonine 68 carries the post-translational modification Phosphothreonine. Histidine 94 contributes to the heme b binding site.

Belongs to the globin family. Monomeric.

The protein resides in the cytoplasm. It localises to the sarcoplasm. It carries out the reaction Fe(III)-heme b-[protein] + nitric oxide + H2O = Fe(II)-heme b-[protein] + nitrite + 2 H(+). The enzyme catalyses H2O2 + AH2 = A + 2 H2O. Functionally, monomeric heme protein which primary function is to store oxygen and facilitate its diffusion within muscle tissues. Reversibly binds oxygen through a pentacoordinated heme iron and enables its timely and efficient release as needed during periods of heightened demand. Depending on the oxidative conditions of tissues and cells, and in addition to its ability to bind oxygen, it also has a nitrite reductase activity whereby it regulates the production of bioactive nitric oxide. Under stress conditions, like hypoxia and anoxia, it also protects cells against reactive oxygen species thanks to its pseudoperoxidase activity. The sequence is that of Myoglobin (MB) from Loxodonta africana (African elephant).